A 214-amino-acid polypeptide reads, in one-letter code: MANEKLDGINPTRNELLNLKDRAKLSIKGHSLLKEKRDALIKEFFEILDRVQGSRDEVEKKLAIAYSELNKAQIDMGDMAVKRAALSVRESIELDISSRSIMGVSVPVVKSRATHNDVLSRGYGFAGTSANLDVAAKEFEESIKIIIELGEIEKTIIMLAREVEATKRRVNALEHVIIPRIKNTISFIEMRLEEMERESFAQLKVIKKNIDERE.

Belongs to the V-ATPase D subunit family. As to quaternary structure, has multiple subunits with at least A(3), B(3), C, D, E, F, H, I and proteolipid K(x).

It localises to the cell membrane. Functionally, component of the A-type ATP synthase that produces ATP from ADP in the presence of a proton gradient across the membrane. The sequence is that of A-type ATP synthase subunit D from Methanosphaera stadtmanae (strain ATCC 43021 / DSM 3091 / JCM 11832 / MCB-3).